The following is a 290-amino-acid chain: Light-independent protochlorophyllide reductase iron-sulfur ATP-binding protein (290 aa).

Residues 10-15 and Lys-39 contribute to the ATP site; that span reads GIGKST. Ser-14 serves as a coordination point for Mg(2+). 2 residues coordinate [4Fe-4S] cluster: Cys-95 and Cys-129. ATP is bound at residue 180 to 181; it reads NR.

It belongs to the NifH/BchL/ChlL family. As to quaternary structure, homodimer. Protochlorophyllide reductase is composed of three subunits; ChlL, ChlN and ChlB. [4Fe-4S] cluster serves as cofactor.

It localises to the plastid. The protein localises to the chloroplast. It catalyses the reaction chlorophyllide a + oxidized 2[4Fe-4S]-[ferredoxin] + 2 ADP + 2 phosphate = protochlorophyllide a + reduced 2[4Fe-4S]-[ferredoxin] + 2 ATP + 2 H2O. Its pathway is porphyrin-containing compound metabolism; chlorophyll biosynthesis (light-independent). Component of the dark-operative protochlorophyllide reductase (DPOR) that uses Mg-ATP and reduced ferredoxin to reduce ring D of protochlorophyllide (Pchlide) to form chlorophyllide a (Chlide). This reaction is light-independent. The L component serves as a unique electron donor to the NB-component of the complex, and binds Mg-ATP. This chain is Light-independent protochlorophyllide reductase iron-sulfur ATP-binding protein, found in Zygnema circumcarinatum (Green alga).